Consider the following 225-residue polypeptide: 3-dehydroquinate dehydratase (225 aa).

3-dehydroquinate contacts are provided by residues Ser6, 30 to 32, and Arg62; that span reads EWR. His118 serves as the catalytic Proton donor/acceptor. The active-site Schiff-base intermediate with substrate is Lys143. 3-dehydroquinate-binding residues include Arg186, Ser205, and Gln209.

Belongs to the type-I 3-dehydroquinase family. In terms of assembly, homodimer.

The catalysed reaction is 3-dehydroquinate = 3-dehydroshikimate + H2O. It participates in metabolic intermediate biosynthesis; chorismate biosynthesis; chorismate from D-erythrose 4-phosphate and phosphoenolpyruvate: step 3/7. Its function is as follows. Involved in the third step of the chorismate pathway, which leads to the biosynthesis of aromatic amino acids. Catalyzes the cis-dehydration of 3-dehydroquinate (DHQ) and introduces the first double bond of the aromatic ring to yield 3-dehydroshikimate. This Streptococcus pneumoniae (strain Hungary19A-6) protein is 3-dehydroquinate dehydratase.